The primary structure comprises 424 residues: Lactate racemase (424 aa).

Asp72–Arg75 serves as a coordination point for Ni(II)-pyridinium-3,5-bisthiocarboxylate mononucleotide. Residues His108 and His174 each act as proton donor/acceptor in the active site. Ni(II)-pyridinium-3,5-bisthiocarboxylate mononucleotide-binding residues include Lys184 and His200. Substrate is bound by residues Gln295 and Lys298.

Belongs to the lactate racemase family. As to quaternary structure, homodimer. Requires Ni(II)-pyridinium-3,5-bisthiocarboxylate mononucleotide as cofactor.

The catalysed reaction is (S)-lactate = (R)-lactate. Its activity is regulated as follows. Activation of the apo-enzyme requires the three accessory proteins LarB, LarE and LarC, that are involved in the biosynthesis of the nickel-pincer cofactor of LarA. Inhibited by sulfite that behaves as a mixed inhibitor. Catalyzes the interconversion between the D- and L-isomers of lactate. May act as a rescue enzyme to ensure D-lactate production in physiological conditions where its production by the D-lactate dehydrogenase LdhD is not sufficient. D-Lactate is absolutely required for growth of L.plantarum and is an essential component of the cell wall peptidoglycan in this species, where it is incorporated as the last residue of the muramoyl-pentadepsipeptide peptidoglycan precursor; its incorporation confers high level of vancomycin resistance. This chain is Lactate racemase, found in Lactiplantibacillus plantarum (strain ATCC BAA-793 / NCIMB 8826 / WCFS1) (Lactobacillus plantarum).